The chain runs to 349 residues: Probable dual-specificity RNA methyltransferase RlmN (349 aa).

Glu-93 acts as the Proton acceptor in catalysis. The region spanning 99–329 (YKHGNTICVS…TTIRREMGSD (231 aa)) is the Radical SAM core domain. A disulfide bridge links Cys-106 with Cys-334. Cys-113, Cys-117, and Cys-120 together coordinate [4Fe-4S] cluster. S-adenosyl-L-methionine contacts are provided by residues 160-161 (GE), Ser-192, 215-217 (SLH), and Asn-291. Catalysis depends on Cys-334, which acts as the S-methylcysteine intermediate.

This sequence belongs to the radical SAM superfamily. RlmN family. [4Fe-4S] cluster serves as cofactor.

It is found in the cytoplasm. It catalyses the reaction adenosine(2503) in 23S rRNA + 2 reduced [2Fe-2S]-[ferredoxin] + 2 S-adenosyl-L-methionine = 2-methyladenosine(2503) in 23S rRNA + 5'-deoxyadenosine + L-methionine + 2 oxidized [2Fe-2S]-[ferredoxin] + S-adenosyl-L-homocysteine. It carries out the reaction adenosine(37) in tRNA + 2 reduced [2Fe-2S]-[ferredoxin] + 2 S-adenosyl-L-methionine = 2-methyladenosine(37) in tRNA + 5'-deoxyadenosine + L-methionine + 2 oxidized [2Fe-2S]-[ferredoxin] + S-adenosyl-L-homocysteine. Functionally, specifically methylates position 2 of adenine 2503 in 23S rRNA and position 2 of adenine 37 in tRNAs. The polypeptide is Probable dual-specificity RNA methyltransferase RlmN (Clostridium tetani (strain Massachusetts / E88)).